The primary structure comprises 112 residues: MSTKAELACVYASLILVDDDVAVTGEKINTILKAANVEVEPYWPGLFAKALEGINVKDLITNIGSGVGAAPAGGAAPAAAAAAPAAESKKEEKKKEEESDQSDDDMGFGLFD.

Residues 80 to 112 form a disordered region; sequence AAAAPAAESKKEEKKKEEESDQSDDDMGFGLFD. A compositionally biased stretch (basic and acidic residues) spans 87–97; that stretch reads ESKKEEKKKEE. Serine 99 and serine 102 each carry phosphoserine.

It belongs to the eukaryotic ribosomal protein P1/P2 family. As to quaternary structure, P1 and P2 exist as dimers at the large ribosomal subunit.

Plays an important role in the elongation step of protein synthesis. The chain is Large ribosomal subunit protein P1 (RpLP1) from Drosophila melanogaster (Fruit fly).